A 242-amino-acid polypeptide reads, in one-letter code: tRNA pseudouridine synthase A (242 aa).

The active-site Nucleophile is aspartate 51. Residue tyrosine 107 coordinates substrate.

This sequence belongs to the tRNA pseudouridine synthase TruA family. Homodimer.

It carries out the reaction uridine(38/39/40) in tRNA = pseudouridine(38/39/40) in tRNA. Functionally, formation of pseudouridine at positions 38, 39 and 40 in the anticodon stem and loop of transfer RNAs. This chain is tRNA pseudouridine synthase A, found in Helicobacter pylori (strain HPAG1).